The chain runs to 231 residues: uncharacterized protein (231 aa).

Residues 1–10 (MDGKKREVEN) are compositionally biased toward basic and acidic residues. Residues 1 to 35 (MDGKKREVENGKNGNNIKDGNSSNTTNYGKDTKTT) are disordered. Residues 11–24 (GKNGNNIKDGNSSN) are compositionally biased toward low complexity. Residues 25-35 (TTNYGKDTKTT) show a composition bias toward polar residues.

This is an uncharacterized protein from Aquifex aeolicus (strain VF5).